Here is a 197-residue protein sequence, read N- to C-terminus: Probable GTP-binding protein EngB (197 aa).

An EngB-type G domain is found at 22-195 (ELPEVALAGR…WKAIYALITE (174 aa)). GTP is bound by residues 30-37 (GRSNVGKS), 57-61 (GKTQT), 75-78 (DVPG), 142-145 (TKLD), and 174-176 (FSA). The Mg(2+) site is built by S37 and T59.

This sequence belongs to the TRAFAC class TrmE-Era-EngA-EngB-Septin-like GTPase superfamily. EngB GTPase family. Requires Mg(2+) as cofactor.

Necessary for normal cell division and for the maintenance of normal septation. This is Probable GTP-binding protein EngB from Exiguobacterium sp. (strain ATCC BAA-1283 / AT1b).